Here is a 272-residue protein sequence, read N- to C-terminus: Hydroxyethylthiazole kinase (272 aa).

A substrate-binding site is contributed by M46. ATP-binding residues include R122 and T168. G195 contacts substrate.

This sequence belongs to the Thz kinase family. Mg(2+) is required as a cofactor.

The catalysed reaction is 5-(2-hydroxyethyl)-4-methylthiazole + ATP = 4-methyl-5-(2-phosphooxyethyl)-thiazole + ADP + H(+). It participates in cofactor biosynthesis; thiamine diphosphate biosynthesis; 4-methyl-5-(2-phosphoethyl)-thiazole from 5-(2-hydroxyethyl)-4-methylthiazole: step 1/1. In terms of biological role, catalyzes the phosphorylation of the hydroxyl group of 4-methyl-5-beta-hydroxyethylthiazole (THZ). In Alkaliphilus metalliredigens (strain QYMF), this protein is Hydroxyethylthiazole kinase.